A 23-amino-acid polypeptide reads, in one-letter code: Retinol-binding protein 3 (23 aa).

The protein localises to the secreted. It localises to the extracellular space. Its subcellular location is the extracellular matrix. The protein resides in the interphotoreceptor matrix. Functionally, IRBP shuttles 11-cis and all trans retinoids between the retinol isomerase in the pigment epithelium and the visual pigments in the photoreceptor cells of the retina. The polypeptide is Retinol-binding protein 3 (RBP3) (Oryctolagus cuniculus (Rabbit)).